The sequence spans 204 residues: Imidazoleglycerol-phosphate dehydratase (204 aa).

Belongs to the imidazoleglycerol-phosphate dehydratase family.

It is found in the cytoplasm. It carries out the reaction D-erythro-1-(imidazol-4-yl)glycerol 3-phosphate = 3-(imidazol-4-yl)-2-oxopropyl phosphate + H2O. The protein operates within amino-acid biosynthesis; L-histidine biosynthesis; L-histidine from 5-phospho-alpha-D-ribose 1-diphosphate: step 6/9. This chain is Imidazoleglycerol-phosphate dehydratase, found in Rhodococcus jostii (strain RHA1).